A 374-amino-acid polypeptide reads, in one-letter code: Chorismate synthase (374 aa).

An NADP(+)-binding site is contributed by arginine 55. FMN-binding positions include 132-134, glycine 293, 308-312, and arginine 335; these read RGS and KPTPS.

This sequence belongs to the chorismate synthase family. FMNH2 is required as a cofactor.

It carries out the reaction 5-O-(1-carboxyvinyl)-3-phosphoshikimate = chorismate + phosphate. It participates in metabolic intermediate biosynthesis; chorismate biosynthesis; chorismate from D-erythrose 4-phosphate and phosphoenolpyruvate: step 7/7. Catalyzes the anti-1,4-elimination of the C-3 phosphate and the C-6 proR hydrogen from 5-enolpyruvylshikimate-3-phosphate (EPSP) to yield chorismate, which is the branch point compound that serves as the starting substrate for the three terminal pathways of aromatic amino acid biosynthesis. This reaction introduces a second double bond into the aromatic ring system. This chain is Chorismate synthase, found in Methanothermobacter thermautotrophicus (strain ATCC 29096 / DSM 1053 / JCM 10044 / NBRC 100330 / Delta H) (Methanobacterium thermoautotrophicum).